Here is a 194-residue protein sequence, read N- to C-terminus: Small ribosomal subunit protein uS4c (194 aa).

The S4 RNA-binding domain occupies 84-144 (MRLDTLLYRT…KEILKSLNDK (61 aa)).

The protein belongs to the universal ribosomal protein uS4 family. As to quaternary structure, part of the 30S ribosomal subunit. Contacts protein S5. The interaction surface between S4 and S5 is involved in control of translational fidelity.

It is found in the plastid. Its subcellular location is the chloroplast. In terms of biological role, one of the primary rRNA binding proteins, it binds directly to 16S rRNA where it nucleates assembly of the body of the 30S subunit. With S5 and S12 plays an important role in translational accuracy. The polypeptide is Small ribosomal subunit protein uS4c (rps4) (Bigelowiella natans (Pedinomonas minutissima)).